An 82-amino-acid chain; its full sequence is Small ribosomal subunit protein bS16 (82 aa).

It belongs to the bacterial ribosomal protein bS16 family.

This Yersinia enterocolitica serotype O:8 / biotype 1B (strain NCTC 13174 / 8081) protein is Small ribosomal subunit protein bS16.